A 209-amino-acid chain; its full sequence is 3-hexulose-6-phosphate synthase (209 aa).

The protein belongs to the HPS/KGPDC family. HPS subfamily. As to quaternary structure, homodimer.

The enzyme catalyses D-ribulose 5-phosphate + formaldehyde = D-arabino-hex-3-ulose 6-phosphate. The protein operates within one-carbon metabolism; formaldehyde assimilation via RuMP pathway; D-fructose 6-phosphate from D-ribulose 5-phosphate and formaldehyde: step 1/2. Functionally, catalyzes the condensation of ribulose 5-phosphate with formaldehyde to form 3-hexulose 6-phosphate. This chain is 3-hexulose-6-phosphate synthase (rmpA), found in Methylomonas aminofaciens.